The sequence spans 814 residues: Putative serine/threonine-protein kinase-like protein CCR3 (814 aa).

Residues 1–30 form the signal peptide; the sequence is MKRFINSTVTFSVTVTIAVIIFFLLSPVTS. Asn-6, Asn-68, Asn-136, Asn-215, Asn-226, Asn-251, Asn-260, Asn-275, Asn-299, and Asn-309 each carry an N-linked (GlcNAc...) asparagine glycan. Over 31-393 the chain is Extracellular; the sequence is LGSGSTYAVV…SSPPSKALTR (363 aa). Residues 366 to 381 are compositionally biased toward pro residues; sequence SQFPLPPPPPPPPPSP. The tract at residues 366–388 is disordered; that stretch reads SQFPLPPPPPPPPPSPSTSSPPS. Residues 394-414 form a helical membrane-spanning segment; sequence GLLAFAIVGSVGAFAGICSVV. Over 415-814 the chain is Cytoplasmic; sequence YCLWTGVCLG…SSGICSIVSD (400 aa). The interval 433 to 478 is disordered; it reads QPTITRGGSNSRSNSSNSRSLSIRRQGSRMLSMRRQRSGTSSMKHA. Over residues 441–457 the composition is skewed to low complexity; that stretch reads SNSRSNSSNSRSLSIRR. The 299-residue stretch at 496-794 folds into the Protein kinase domain; it reads FSLENKIGSG…DIVGNLERAL (299 aa). ATP contacts are provided by residues 502-510 and Lys-524; that span reads IGSGSFGVV. The active-site Proton acceptor is the Asp-631.

This sequence belongs to the protein kinase superfamily. Ser/Thr protein kinase family. As to quaternary structure, homodimer. Expressed in roots, leaves, shoot apical meristems (SAM), and floral buds.

It localises to the membrane. The enzyme catalyses L-seryl-[protein] + ATP = O-phospho-L-seryl-[protein] + ADP + H(+). It catalyses the reaction L-threonyl-[protein] + ATP = O-phospho-L-threonyl-[protein] + ADP + H(+). In terms of biological role, serine/threonine-protein kinase. The protein is Putative serine/threonine-protein kinase-like protein CCR3 (CCR3) of Arabidopsis thaliana (Mouse-ear cress).